We begin with the raw amino-acid sequence, 121 residues long: UPF0344 protein BT9727_1053 (121 aa).

4 helical membrane-spanning segments follow: residues 6–26 (ITAW…YSAG), 38–58 (LMYI…MKTA), 65–85 (WYGL…MVLV), and 92–112 (ATGA…YLGL).

The protein belongs to the UPF0344 family.

It localises to the cell membrane. The chain is UPF0344 protein BT9727_1053 from Bacillus thuringiensis subsp. konkukian (strain 97-27).